Here is a 344-residue protein sequence, read N- to C-terminus: Ferrochelatase (344 aa).

Fe cation is bound by residues His-214 and Glu-295.

This sequence belongs to the ferrochelatase family.

The protein resides in the cytoplasm. It carries out the reaction heme b + 2 H(+) = protoporphyrin IX + Fe(2+). It participates in porphyrin-containing compound metabolism; protoheme biosynthesis; protoheme from protoporphyrin-IX: step 1/1. Functionally, catalyzes the ferrous insertion into protoporphyrin IX. This is Ferrochelatase from Agrobacterium fabrum (strain C58 / ATCC 33970) (Agrobacterium tumefaciens (strain C58)).